The primary structure comprises 249 residues: Adenosylcobinamide-GDP ribazoletransferase (249 aa).

A run of 6 helical transmembrane segments spans residues 32–52 (MVAF…TWFG), 53–73 (ATWL…WGAI), 107–127 (IGTM…LFVL), 136–156 (ALIV…FWFP), 190–210 (LLWW…IIIA), and 224–244 (TYGA…AALV).

The protein belongs to the CobS family. The cofactor is Mg(2+).

It localises to the cell membrane. It carries out the reaction alpha-ribazole + adenosylcob(III)inamide-GDP = adenosylcob(III)alamin + GMP + H(+). The enzyme catalyses alpha-ribazole 5'-phosphate + adenosylcob(III)inamide-GDP = adenosylcob(III)alamin 5'-phosphate + GMP + H(+). The protein operates within cofactor biosynthesis; adenosylcobalamin biosynthesis; adenosylcobalamin from cob(II)yrinate a,c-diamide: step 7/7. In terms of biological role, joins adenosylcobinamide-GDP and alpha-ribazole to generate adenosylcobalamin (Ado-cobalamin). Also synthesizes adenosylcobalamin 5'-phosphate from adenosylcobinamide-GDP and alpha-ribazole 5'-phosphate. The chain is Adenosylcobinamide-GDP ribazoletransferase from Herpetosiphon aurantiacus (strain ATCC 23779 / DSM 785 / 114-95).